An 89-amino-acid polypeptide reads, in one-letter code: Small ribosomal subunit protein uS15 (89 aa).

It belongs to the universal ribosomal protein uS15 family. In terms of assembly, part of the 30S ribosomal subunit. Forms a bridge to the 50S subunit in the 70S ribosome, contacting the 23S rRNA.

One of the primary rRNA binding proteins, it binds directly to 16S rRNA where it helps nucleate assembly of the platform of the 30S subunit by binding and bridging several RNA helices of the 16S rRNA. Its function is as follows. Forms an intersubunit bridge (bridge B4) with the 23S rRNA of the 50S subunit in the ribosome. The chain is Small ribosomal subunit protein uS15 from Desulfosudis oleivorans (strain DSM 6200 / JCM 39069 / Hxd3) (Desulfococcus oleovorans).